The sequence spans 526 residues: WRKY transcription factor 72A (526 aa).

2 stretches are compositionally biased toward basic and acidic residues: residues Lys40–Ser52 and Leu60–Met76. 2 disordered regions span residues Lys40–Met76 and Ser170–Pro200. Residues Gly62–Glu106 are a coiled coil. Over residues Ser170–Leu185 the composition is skewed to low complexity. The segment at residues Cys232–Pro298 is a DNA-binding region (WRKY).

The protein belongs to the WRKY group II-b family. In terms of tissue distribution, expressed in roots, trichomes and fruits.

Its subcellular location is the nucleus. Transcription activator involved in the transcriptional regulation of terpene biosynthesis in glandular trichomes. Binds to the promoter of the linalool synthase TPS5 and promotes TPS5 gene transactivation. In association with WRKY72B, contributes to basal defense against root-knot nematodes (RKNs) and potato aphids, as well as Mi-1-mediated gene-for-gene resistance to these pests. Both WRKY72A and WRKY72B are not required for gene-for-gene resistance mediated by Pto, another tomato R gene. The protein is WRKY transcription factor 72A of Solanum lycopersicum (Tomato).